We begin with the raw amino-acid sequence, 582 residues long: Aspartate--tRNA ligase (582 aa).

Glu-174 contacts L-aspartate. The segment at 198-201 (QITK) is aspartate. An L-aspartate-binding site is contributed by Arg-220. ATP contacts are provided by residues 220–222 (RDE) and Gln-229. His-443 lines the L-aspartate pocket. Position 477 (Glu-477) interacts with ATP. L-aspartate is bound at residue Arg-484. 529-532 (GLDR) provides a ligand contact to ATP.

The protein belongs to the class-II aminoacyl-tRNA synthetase family. Type 1 subfamily. Homodimer.

It is found in the cytoplasm. It catalyses the reaction tRNA(Asp) + L-aspartate + ATP = L-aspartyl-tRNA(Asp) + AMP + diphosphate. Its function is as follows. Catalyzes the attachment of L-aspartate to tRNA(Asp) in a two-step reaction: L-aspartate is first activated by ATP to form Asp-AMP and then transferred to the acceptor end of tRNA(Asp). The sequence is that of Aspartate--tRNA ligase from Streptococcus pyogenes serotype M28 (strain MGAS6180).